Reading from the N-terminus, the 323-residue chain is NADH-cytochrome b5 reductase 2 (323 aa).

A helical transmembrane segment spans residues 32-48 (LAPIYLGVGLIGLGVGL). Residues 72 to 177 (QGWVDLKLAQ…KGPIPKYPWE (106 aa)) form the FAD-binding FR-type domain. An FAD-binding site is contributed by 180–215 (KHKHICLIAGGTGITPMYQLARKIFKDPEDQTKVTL).

This sequence belongs to the flavoprotein pyridine nucleotide cytochrome reductase family. The cofactor is FAD.

The protein localises to the mitochondrion outer membrane. The enzyme catalyses 2 Fe(III)-[cytochrome b5] + NADH = 2 Fe(II)-[cytochrome b5] + NAD(+) + H(+). In terms of biological role, may mediate the reduction of outer membrane cytochrome b5. This Aspergillus fumigatus (strain ATCC MYA-4609 / CBS 101355 / FGSC A1100 / Af293) (Neosartorya fumigata) protein is NADH-cytochrome b5 reductase 2 (mcr1).